The sequence spans 264 residues: Thymidylate synthase (264 aa).

R21 is a dUMP binding site. Position 51 (H51) interacts with (6R)-5,10-methylene-5,6,7,8-tetrahydrofolate. Residue 126–127 coordinates dUMP; it reads RR. Residue C146 is the Nucleophile of the active site. DUMP is bound by residues 166–169, N177, and 207–209; these read RSAD and HLY. D169 serves as a coordination point for (6R)-5,10-methylene-5,6,7,8-tetrahydrofolate. A263 lines the (6R)-5,10-methylene-5,6,7,8-tetrahydrofolate pocket.

This sequence belongs to the thymidylate synthase family. Bacterial-type ThyA subfamily. In terms of assembly, homodimer.

It is found in the cytoplasm. It carries out the reaction dUMP + (6R)-5,10-methylene-5,6,7,8-tetrahydrofolate = 7,8-dihydrofolate + dTMP. It functions in the pathway pyrimidine metabolism; dTTP biosynthesis. Functionally, catalyzes the reductive methylation of 2'-deoxyuridine-5'-monophosphate (dUMP) to 2'-deoxythymidine-5'-monophosphate (dTMP) while utilizing 5,10-methylenetetrahydrofolate (mTHF) as the methyl donor and reductant in the reaction, yielding dihydrofolate (DHF) as a by-product. This enzymatic reaction provides an intracellular de novo source of dTMP, an essential precursor for DNA biosynthesis. This chain is Thymidylate synthase, found in Dechloromonas aromatica (strain RCB).